The sequence spans 239 residues: Uridylate kinase (239 aa).

10 to 13 contributes to the ATP binding site; sequence KLSG. Gly52 contributes to the UMP binding site. Gly53 and Arg57 together coordinate ATP. UMP-binding positions include Asp72 and 133–140; that span reads TGNPFFTT. 3 residues coordinate ATP: Thr160, Tyr166, and Asp169.

It belongs to the UMP kinase family. As to quaternary structure, homohexamer.

The protein resides in the cytoplasm. The catalysed reaction is UMP + ATP = UDP + ADP. It functions in the pathway pyrimidine metabolism; CTP biosynthesis via de novo pathway; UDP from UMP (UMPK route): step 1/1. Its activity is regulated as follows. Inhibited by UTP. In terms of biological role, catalyzes the reversible phosphorylation of UMP to UDP. The chain is Uridylate kinase from Porphyromonas gingivalis (strain ATCC BAA-308 / W83).